A 338-amino-acid chain; its full sequence is Glutamyl-tRNA reductase (338 aa).

Residues 50 to 53 (TCHR), Ser102, 107 to 109 (ETE), and Gln113 each bind substrate. The Nucleophile role is filled by Cys51. An NADP(+)-binding site is contributed by 181-186 (GYSDIN).

Belongs to the glutamyl-tRNA reductase family. In terms of assembly, homodimer.

The catalysed reaction is (S)-4-amino-5-oxopentanoate + tRNA(Glu) + NADP(+) = L-glutamyl-tRNA(Glu) + NADPH + H(+). The protein operates within porphyrin-containing compound metabolism; protoporphyrin-IX biosynthesis; 5-aminolevulinate from L-glutamyl-tRNA(Glu): step 1/2. Functionally, catalyzes the NADPH-dependent reduction of glutamyl-tRNA(Glu) to glutamate 1-semialdehyde (GSA). The sequence is that of Glutamyl-tRNA reductase from Chlamydia caviae (strain ATCC VR-813 / DSM 19441 / 03DC25 / GPIC) (Chlamydophila caviae).